We begin with the raw amino-acid sequence, 203 residues long: Urease accessory protein UreG (203 aa).

14-21 (GPVGAGKT) serves as a coordination point for GTP.

It belongs to the SIMIBI class G3E GTPase family. UreG subfamily. As to quaternary structure, homodimer. UreD, UreF and UreG form a complex that acts as a GTP-hydrolysis-dependent molecular chaperone, activating the urease apoprotein by helping to assemble the nickel containing metallocenter of UreC. The UreE protein probably delivers the nickel.

It is found in the cytoplasm. Functionally, facilitates the functional incorporation of the urease nickel metallocenter. This process requires GTP hydrolysis, probably effectuated by UreG. In Jannaschia sp. (strain CCS1), this protein is Urease accessory protein UreG.